The sequence spans 389 residues: 1-deoxy-D-xylulose 5-phosphate reductoisomerase (389 aa).

Positions 11, 12, 13, 14, 39, and 122 each coordinate NADPH. Lys-123 provides a ligand contact to 1-deoxy-D-xylulose 5-phosphate. Glu-124 contributes to the NADPH binding site. Asp-148 is a binding site for Mn(2+). Residues Ser-149, Glu-150, Ser-174, and His-197 each coordinate 1-deoxy-D-xylulose 5-phosphate. Glu-150 provides a ligand contact to Mn(2+). Gly-203 lines the NADPH pocket. 1-deoxy-D-xylulose 5-phosphate contacts are provided by Ser-210, Asn-215, Lys-216, and Glu-219. Mn(2+) is bound at residue Glu-219.

It belongs to the DXR family. The cofactor is Mg(2+). It depends on Mn(2+) as a cofactor.

It carries out the reaction 2-C-methyl-D-erythritol 4-phosphate + NADP(+) = 1-deoxy-D-xylulose 5-phosphate + NADPH + H(+). The protein operates within isoprenoid biosynthesis; isopentenyl diphosphate biosynthesis via DXP pathway; isopentenyl diphosphate from 1-deoxy-D-xylulose 5-phosphate: step 1/6. Its function is as follows. Catalyzes the NADPH-dependent rearrangement and reduction of 1-deoxy-D-xylulose-5-phosphate (DXP) to 2-C-methyl-D-erythritol 4-phosphate (MEP). The polypeptide is 1-deoxy-D-xylulose 5-phosphate reductoisomerase (Leptospira interrogans serogroup Icterohaemorrhagiae serovar Lai (strain 56601)).